A 742-amino-acid polypeptide reads, in one-letter code: Phosphoribosylformylglycinamidine synthase subunit PurL (742 aa).

His54 is an active-site residue. Positions 57 and 96 each coordinate ATP. Position 98 (Glu98) interacts with Mg(2+). Substrate contacts are provided by residues Ser99–His102 and Arg121. Residue His100 is the Proton acceptor of the active site. Asp122 is a Mg(2+) binding site. 2 residues coordinate substrate: Gly225 and Gln245. Asp273 is a Mg(2+) binding site. Glu317 to Gln319 serves as a coordination point for substrate. Residue Gly537 participates in ATP binding. Residue Asn538 participates in Mg(2+) binding. Ser540 lines the substrate pocket.

It belongs to the FGAMS family. In terms of assembly, monomer. Part of the FGAM synthase complex composed of 1 PurL, 1 PurQ and 2 PurS subunits.

It localises to the cytoplasm. It catalyses the reaction N(2)-formyl-N(1)-(5-phospho-beta-D-ribosyl)glycinamide + L-glutamine + ATP + H2O = 2-formamido-N(1)-(5-O-phospho-beta-D-ribosyl)acetamidine + L-glutamate + ADP + phosphate + H(+). It carries out the reaction L-glutamine + H2O = L-glutamate + NH4(+). The protein operates within purine metabolism; IMP biosynthesis via de novo pathway; 5-amino-1-(5-phospho-D-ribosyl)imidazole from N(2)-formyl-N(1)-(5-phospho-D-ribosyl)glycinamide: step 1/2. In terms of biological role, part of the phosphoribosylformylglycinamidine synthase complex involved in the purines biosynthetic pathway. Catalyzes the ATP-dependent conversion of formylglycinamide ribonucleotide (FGAR) and glutamine to yield formylglycinamidine ribonucleotide (FGAM) and glutamate. The FGAM synthase complex is composed of three subunits. PurQ produces an ammonia molecule by converting glutamine to glutamate. PurL transfers the ammonia molecule to FGAR to form FGAM in an ATP-dependent manner. PurS interacts with PurQ and PurL and is thought to assist in the transfer of the ammonia molecule from PurQ to PurL. In Bacillus subtilis (strain 168), this protein is Phosphoribosylformylglycinamidine synthase subunit PurL.